The chain runs to 517 residues: Probable protein phosphatase 2C 20 (517 aa).

The interval 1-59 (MWVMQGERRRARAPWGPPDTGGALLERWISRERRSDSRDASGSAKQRSAMGNSLPVESK) is disordered. Basic and acidic residues predominate over residues 28 to 39 (WISRERRSDSRD). The 304-residue stretch at 70-373 (KYVVSSMQGW…DNTTVILVLF (304 aa)) folds into the PPM-type phosphatase domain. Residues D105, G106, E323, and D364 each contribute to the Mn(2+) site. Residues 380-517 (AVPPVDTDTD…PPHDDTYHRW (138 aa)) form a disordered region. Positions 402–414 (GSNNATASDNNDP) are enriched in polar residues. The segment covering 438–455 (DATATAVGSSSTTAVAAD) has biased composition (low complexity). Over residues 499 to 517 (LPRSNPDKSPPHDDTYHRW) the composition is skewed to basic and acidic residues.

The protein belongs to the PP2C family. It depends on Mg(2+) as a cofactor. Requires Mn(2+) as cofactor.

The enzyme catalyses O-phospho-L-seryl-[protein] + H2O = L-seryl-[protein] + phosphate. It carries out the reaction O-phospho-L-threonyl-[protein] + H2O = L-threonyl-[protein] + phosphate. This chain is Probable protein phosphatase 2C 20, found in Oryza sativa subsp. japonica (Rice).